The chain runs to 422 residues: UPF0597 protein Kole_0595 (422 aa).

The protein belongs to the UPF0597 family.

The chain is UPF0597 protein Kole_0595 from Kosmotoga olearia (strain ATCC BAA-1733 / DSM 21960 / TBF 19.5.1).